Reading from the N-terminus, the 445-residue chain is Histidinol dehydrogenase (445 aa).

Tyr-138, Gln-199, and Asn-222 together coordinate NAD(+). Substrate is bound by residues Ser-245, Gln-267, and His-270. The Zn(2+) site is built by Gln-267 and His-270. Catalysis depends on proton acceptor residues Glu-335 and His-336. Substrate is bound by residues His-336, Asp-369, Glu-423, and His-428. Position 369 (Asp-369) interacts with Zn(2+). Zn(2+) is bound at residue His-428.

Belongs to the histidinol dehydrogenase family. The cofactor is Zn(2+).

The enzyme catalyses L-histidinol + 2 NAD(+) + H2O = L-histidine + 2 NADH + 3 H(+). The protein operates within amino-acid biosynthesis; L-histidine biosynthesis; L-histidine from 5-phospho-alpha-D-ribose 1-diphosphate: step 9/9. Its function is as follows. Catalyzes the sequential NAD-dependent oxidations of L-histidinol to L-histidinaldehyde and then to L-histidine. The sequence is that of Histidinol dehydrogenase from Burkholderia pseudomallei (strain 1710b).